The sequence spans 220 residues: MTHSPDLKGSSFTLSVLHLSDNEIANTVEFLQEKVSQAPSFFASAPLVINIAKVQGDIDFPALKQGIADAGFIPVGITGSKDKRVQNLASEAGFAIMSASKSPSQAPAKMAPTKVVRTPVRSGQQIYAKDGDLVVLAHVSAGAEVIADGSIHIHGTLRGRAIAGASGQQEARIICHDLQAELVSIAGDYWLSDQIESEYWQKKVMISKAEESLHLEVLAI.

This sequence belongs to the MinC family. In terms of assembly, interacts with MinD and FtsZ.

Cell division inhibitor that blocks the formation of polar Z ring septums. Rapidly oscillates between the poles of the cell to destabilize FtsZ filaments that have formed before they mature into polar Z rings. Prevents FtsZ polymerization. This chain is Probable septum site-determining protein MinC, found in Vibrio parahaemolyticus serotype O3:K6 (strain RIMD 2210633).